The following is a 460-amino-acid chain: Adenylosuccinate lyase (460 aa).

N(6)-(1,2-dicarboxyethyl)-AMP-binding positions include 15–16 (RY), 88–90 (NHD), and 120–121 (TS). His169 acts as the Proton donor/acceptor in catalysis. Gln245 contacts N(6)-(1,2-dicarboxyethyl)-AMP. Ser293 serves as the catalytic Proton donor/acceptor. Residues Ser294, 299-301 (KIN), Asn307, Arg333, and 338-342 (STVLR) contribute to the N(6)-(1,2-dicarboxyethyl)-AMP site.

It belongs to the lyase 1 family. Adenylosuccinate lyase subfamily. In terms of assembly, homotetramer. Residues from neighboring subunits contribute catalytic and substrate-binding residues to each active site.

The catalysed reaction is N(6)-(1,2-dicarboxyethyl)-AMP = fumarate + AMP. It carries out the reaction (2S)-2-[5-amino-1-(5-phospho-beta-D-ribosyl)imidazole-4-carboxamido]succinate = 5-amino-1-(5-phospho-beta-D-ribosyl)imidazole-4-carboxamide + fumarate. It functions in the pathway purine metabolism; AMP biosynthesis via de novo pathway; AMP from IMP: step 2/2. It participates in purine metabolism; IMP biosynthesis via de novo pathway; 5-amino-1-(5-phospho-D-ribosyl)imidazole-4-carboxamide from 5-amino-1-(5-phospho-D-ribosyl)imidazole-4-carboxylate: step 2/2. Catalyzes two reactions in de novo purine nucleotide biosynthesis. Catalyzes the breakdown of 5-aminoimidazole- (N-succinylocarboxamide) ribotide (SAICAR or 2-[5-amino-1-(5-phospho-beta-D-ribosyl)imidazole-4-carboxamido]succinate) to 5-aminoimidazole-4-carboxamide ribotide (AICAR or 5-amino-1-(5-phospho-beta-D-ribosyl)imidazole-4-carboxamide) and fumarate, and of adenylosuccinate (ADS or N(6)-(1,2-dicarboxyethyl)-AMP) to adenosine monophosphate (AMP) and fumarate. This is Adenylosuccinate lyase (purB) from Buchnera aphidicola subsp. Baizongia pistaciae (strain Bp).